We begin with the raw amino-acid sequence, 306 residues long: Pantothenate kinase (306 aa).

90–97 (GSVAVGKS) serves as a coordination point for ATP.

It belongs to the prokaryotic pantothenate kinase family.

Its subcellular location is the cytoplasm. The catalysed reaction is (R)-pantothenate + ATP = (R)-4'-phosphopantothenate + ADP + H(+). It functions in the pathway cofactor biosynthesis; coenzyme A biosynthesis; CoA from (R)-pantothenate: step 1/5. The chain is Pantothenate kinase (coaA) from Listeria innocua serovar 6a (strain ATCC BAA-680 / CLIP 11262).